A 1581-amino-acid chain; its full sequence is Ankyrin repeat domain-containing protein 26 (1581 aa).

The tract at residues 1–22 is disordered; sequence MKKIFGFRSKGPSPLGPSARPR. Ser-13 is subject to Phosphoserine. 5 ANK repeats span residues 46–76, 80–109, 113–142, 146–175, and 179–208; these read KDMGKIHKAASVGDVAKVQHILILGKSGVND, KDRTALHLACAYGHPEVVTLLVERKCEIDA, ESSTALIKAVQCQEEECAAILLDHGADPNV, SGNTALHYAVYSENTSMAAKLLAHNANIEA, and DDLTPMLLAVKENKQHIVEFLVKKKASIHA. Disordered stretches follow at residues 225–270, 299–343, 361–381, and 488–652; these read RLQR…FDNK, LDNG…PVEG, SASQEQPNHDNLTRADGWHKS, and VLNK…QTAA. Residues 229 to 250 show a composition bias toward polar residues; the sequence is SENSNPVDNGSEDGSLTRSYNT. Residues Ser-239 and Ser-260 each carry the phosphoserine modification. Over residues 308 to 319 the composition is skewed to acidic residues; sequence SDSPSESEDAIE. Polar residues predominate over residues 327–337; it reads RVQTLSPSRQS. Positions 367–381 are enriched in basic and acidic residues; sequence PNHDNLTRADGWHKS. Residues 491 to 504 show a composition bias toward polar residues; the sequence is KTETVGMTDAQTFK. Basic and acidic residues-rich tracts occupy residues 505-516, 524-538, and 585-601; these read SEPESVSREEQT, SQQKVEEKRKYKNNE, and KEAKKMENEKWVSREPA. A Phosphoserine modification is found at Ser-511. 4 coiled-coil regions span residues 715–845, 876–1345, 1396–1470, and 1521–1550; these read RSHC…NARM, HEKE…MVEH, RSQM…RSLL, and LTKMHQELEKSINRELKEATAELESEFCRV.

As to quaternary structure, interacts with TRIO. Interacts with GPS2. Interacts with CCDC85B. Interacts with HMMR. As to expression, widely expressed. Expressed in the arcuate and ventromedial nuclei within the hypothalamus and in the ependyma and the circumventricular organs (at protein level).

It localises to the cytoplasm. The protein resides in the cytosol. In terms of biological role, acts as a regulator of adipogenesis. Involved in the regulation of the feeding behavior. In Mus musculus (Mouse), this protein is Ankyrin repeat domain-containing protein 26 (Ankrd26).